The following is a 262-amino-acid chain: 3-methyl-2-oxobutanoate hydroxymethyltransferase (262 aa).

Residues Asp42 and Asp81 each coordinate Mg(2+). 3-methyl-2-oxobutanoate contacts are provided by residues 42–43 (DS), Asp81, and Lys110. A Mg(2+)-binding site is contributed by Glu112. Glu180 acts as the Proton acceptor in catalysis.

This sequence belongs to the PanB family. Homodecamer; pentamer of dimers. It depends on Mg(2+) as a cofactor.

It is found in the cytoplasm. It catalyses the reaction 3-methyl-2-oxobutanoate + (6R)-5,10-methylene-5,6,7,8-tetrahydrofolate + H2O = 2-dehydropantoate + (6S)-5,6,7,8-tetrahydrofolate. Its pathway is cofactor biosynthesis; (R)-pantothenate biosynthesis; (R)-pantoate from 3-methyl-2-oxobutanoate: step 1/2. Its function is as follows. Catalyzes the reversible reaction in which hydroxymethyl group from 5,10-methylenetetrahydrofolate is transferred onto alpha-ketoisovalerate to form ketopantoate. The polypeptide is 3-methyl-2-oxobutanoate hydroxymethyltransferase (Legionella pneumophila (strain Lens)).